A 239-amino-acid chain; its full sequence is uncharacterized protein (239 aa).

The disordered stretch occupies residues 129-155; it reads DSLDDEDDNMISSNDPTKSPEEHDTTT. S160 carries the post-translational modification Phosphoserine.

This is an uncharacterized protein from Schizosaccharomyces pombe (strain 972 / ATCC 24843) (Fission yeast).